The primary structure comprises 201 residues: Fas apoptotic inhibitory molecule 1 (201 aa).

This sequence belongs to the FAIM1 family.

It is found in the cytoplasm. Functionally, plays a role as an inducible effector molecule that mediates Fas resistance produced by surface Ig engagement in B cells. This Rattus norvegicus (Rat) protein is Fas apoptotic inhibitory molecule 1 (Faim).